Here is a 150-residue protein sequence, read N- to C-terminus: SsrA-binding protein (150 aa).

Belongs to the SmpB family.

The protein resides in the cytoplasm. In terms of biological role, required for rescue of stalled ribosomes mediated by trans-translation. Binds to transfer-messenger RNA (tmRNA), required for stable association of tmRNA with ribosomes. tmRNA and SmpB together mimic tRNA shape, replacing the anticodon stem-loop with SmpB. tmRNA is encoded by the ssrA gene; the 2 termini fold to resemble tRNA(Ala) and it encodes a 'tag peptide', a short internal open reading frame. During trans-translation Ala-aminoacylated tmRNA acts like a tRNA, entering the A-site of stalled ribosomes, displacing the stalled mRNA. The ribosome then switches to translate the ORF on the tmRNA; the nascent peptide is terminated with the 'tag peptide' encoded by the tmRNA and targeted for degradation. The ribosome is freed to recommence translation, which seems to be the essential function of trans-translation. The polypeptide is SsrA-binding protein (Borreliella afzelii (strain PKo) (Borrelia afzelii)).